The following is a 59-amino-acid chain: UPF0434 protein Noc_2677 (59 aa).

The protein belongs to the UPF0434 family.

In Nitrosococcus oceani (strain ATCC 19707 / BCRC 17464 / JCM 30415 / NCIMB 11848 / C-107), this protein is UPF0434 protein Noc_2677.